The sequence spans 130 residues: UPF0251 protein MmarC6_0272 (130 aa).

This sequence belongs to the UPF0251 family.

The chain is UPF0251 protein MmarC6_0272 from Methanococcus maripaludis (strain C6 / ATCC BAA-1332).